Here is a 143-residue protein sequence, read N- to C-terminus: 3-dehydroquinate dehydratase (143 aa).

Residue Tyr23 is the Proton acceptor of the active site. Positions 74, 80, and 87 each coordinate substrate. Residue His100 is the Proton donor of the active site. Substrate contacts are provided by residues Ile101 to Ser102 and Arg111.

Belongs to the type-II 3-dehydroquinase family. Homododecamer.

The catalysed reaction is 3-dehydroquinate = 3-dehydroshikimate + H2O. Its pathway is metabolic intermediate biosynthesis; chorismate biosynthesis; chorismate from D-erythrose 4-phosphate and phosphoenolpyruvate: step 3/7. Catalyzes a trans-dehydration via an enolate intermediate. The sequence is that of 3-dehydroquinate dehydratase from Endomicrobium trichonymphae.